The sequence spans 439 residues: Protein pop-1 (439 aa).

The disordered stretch occupies residues 1-38; sequence MMADEELGDEVKVFRRDEDADDDPMISGETSEQQLADD. Residues 9-18 are compositionally biased toward basic and acidic residues; it reads DEVKVFRRDE. The tract at residues 87–138 is involved in nuclear asymmetry; the sequence is SGLPIMFPMVVPQYLSPNPNINMMNMMTMRAAMAGAPLSPAFPAMFSPNPLF. The residue at position 125 (S125) is a Phosphoserine; by LIT1. Positions 199-269 form a DNA-binding region, HMG box; it reads IKKPLNAFMW…SHKEKYPQWS (71 aa). Basic and acidic residues predominate over residues 254–265; it reads AKKDRESHKEKY. Disordered stretches follow at residues 254–298, 329–365, and 385–439; these read AKKD…NNDQ, RSGS…MPMN, and SAHL…VCTL. Residues 277–286 are compositionally biased toward basic residues; that stretch reads NKKKPKRKRD. 2 stretches are compositionally biased toward low complexity: residues 346–365 and 385–400; these read GCSS…MPMN and SAHL…SGTS. Positions 409-420 are enriched in acidic residues; that stretch reads SESDVDEDEDID. The span at 422–439 shows a compositional bias: polar residues; that stretch reads TITQQTQEYIMQESVCTL.

It belongs to the TCF/LEF family. In terms of assembly, interacts with hda-1. Interacts with bar-1. Interacts with par-5; the interaction is direct and is enhanced by lit-1-mediated pop-1 phosphorylation. The interaction also leads to the subsequent nuclear export of pop-1. Interacts (when phosphorylated on Ser-125) with lit-1; the interaction is dependent on the beta-catenin-lit-1 complex. Interacts with wrm-1. Post-translationally, phosphorylated on Ser-125 by lit-1 in the beta-catenin-lit-1 complex. Phosphorylation promotes the interaction of pop-1 and par-5 and the subsequent translocation of pop-1 from the nucleus to the cytoplasm.

It is found in the nucleus. The protein localises to the cytoplasm. Functionally, part of the Wnt signaling pathway essential for the specification of the mesodermal cell fate in early embryos. Required for asymmetrical division of somatic gonadal precursor descendants which initiate axis formation required to control organ shape. Similarly, involved in asymmetrical division of seam cells, a stem cell-like lineage. Represses expression of target genes via its interaction with hda-1 histone deacetylase. Required for specification of the M lineage-derived coelomocyte and sex myoblast fate. Regulates coelomocyte fate by positively regulating proliferation and ceh-34 and possibly eya-1 expression in M.dlpa and M.drpa precursors. This Caenorhabditis briggsae protein is Protein pop-1.